The chain runs to 612 residues: MFS siderochrome iron transporter B (612 aa).

Topologically, residues 1 to 86 are cytoplasmic; that stretch reads MLHVLSVGPS…GAQAGVKKIE (86 aa). Residues 55-78 form a disordered region; the sequence is DKEAAHAPANAETNNEEANPSDGA. A compositionally biased stretch (low complexity) spans 60 to 72; sequence HAPANAETNNEEA. The chain crosses the membrane as a helical span at residues 87–104; it reads AVTLSWTRGTAIWFLTLV. Residues 105 to 127 are Extracellular-facing; that stretch reads NDFRLSMYTSLNAYATSSFLGHS. Residues 128–148 traverse the membrane as a helical segment; it reads LLTVINIVSYVMGGSVYIPMA. Topologically, residues 149–156 are cytoplasmic; that stretch reads KALDLWGR. A helical membrane pass occupies residues 157–177; sequence AEGFLLMTFFCILGLILLASS. Residues 178-187 lie on the Extracellular side of the membrane; that stretch reads QNLPTYCAGQ. The chain crosses the membrane as a helical span at residues 188–208; the sequence is VFYKVGFGGLSYTWNVLAADV. Residues 209-215 are Cytoplasmic-facing; it reads TNLRNRG. A helical transmembrane segment spans residues 216–236; it reads LAFAFTSSPALISAFAGSKAA. The Extracellular segment spans residues 237–246; the sequence is SDLLAHSTWR. A helical transmembrane segment spans residues 247–267; that stretch reads WGFGMWAIILPVVALPIYGLL. At 268–302 the chain is on the cytoplasmic side; the sequence is AYHLRQAEKKGVLVKETRDWSITPKTVWWAIMEFD. A helical transmembrane segment spans residues 303 to 323; sequence LPGVLLFAGGFVIFLLPFTLA. The Extracellular segment spans residues 324–334; sequence ATAPHGYQTDY. A helical transmembrane segment spans residues 335 to 355; sequence IIAMITLGLALIIAFGFYEML. Topologically, residues 356–370 are cytoplasmic; the sequence is VAPVPFLNYKFLIDR. The chain crosses the membrane as a helical span at residues 371 to 393; that stretch reads TVLGACLLDMTYQVSYYCYASYL. The Extracellular segment spans residues 394-409; the sequence is PSFLQVVYELDVATAG. Residues 410-430 form a helical membrane-spanning segment; sequence YVTNTFSVVSFVFLFFAGWLI. At 431-435 the chain is on the cytoplasmic side; it reads RWTGR. The helical transmembrane segment at 436–456 threads the bilayer; the sequence is FKWILWVCVPLYIFGLGLMIH. The Extracellular portion of the chain corresponds to 457–463; that stretch reads FRQPGGY. The chain crosses the membrane as a helical span at residues 464–484; sequence IGYIVMCEIFFSVAGSVFILC. Topologically, residues 485–498 are cytoplasmic; it reads VQLAVLASVDHQHV. The chain crosses the membrane as a helical span at residues 499-519; that stretch reads AAVLALLFVMGSIGGSIGSAI. Over 520–575 the chain is Extracellular; it reads CGAIWTSTFLSRLERNLPASAMPDLSLIYSSLPTQLSYPVGSATRTAIVEAYGYAQ. A helical membrane pass occupies residues 576–596; that stretch reads ARMLIAGTAFMVLGFIWVGMM. Residues 597 to 612 are Cytoplasmic-facing; it reads RNLNVKNMTQTKGNVV.

Belongs to the major facilitator superfamily.

The protein resides in the cell tip. It localises to the cytoplasmic vesicle membrane. The protein localises to the cell membrane. Major facilitator transporter involved in triacetylfusarinine C (TAFC) uptake. Can also transport ferricrocin and coprogen, but not ferrichrysin. MirB plays a crucial role for virulence in a murine model of pulmonary aspergillosis, indicating that TAFC-mediated iron uptake plays a dominant role during infection. This Aspergillus fumigatus (strain ATCC MYA-4609 / CBS 101355 / FGSC A1100 / Af293) (Neosartorya fumigata) protein is MFS siderochrome iron transporter B.